Consider the following 779-residue polypeptide: Lysosome membrane protein 2-A (779 aa).

The Cytoplasmic segment spans residues 1–17; that stretch reads MVKRGCCHRKMVNHKGC. Residues 18 to 38 form a helical membrane-spanning segment; it reads LVSGIFLAVIGAVLFILAFAL. Over 39–732 the chain is Lumenal; the sequence is LPHLINQTTQ…LLNSQFKLIK (694 aa). N-linked (GlcNAc...) asparagine glycans are attached at residues asparagine 44, asparagine 86, asparagine 95, asparagine 114, asparagine 117, asparagine 201, asparagine 239, asparagine 262, asparagine 266, asparagine 277, asparagine 369, asparagine 410, asparagine 440, asparagine 508, asparagine 543, asparagine 601, asparagine 619, asparagine 651, and asparagine 693. A helical transmembrane segment spans residues 733-753; the sequence is ILGFVPVIVVSIIGGIILIAG. Over 754-779 the chain is Cytoplasmic; it reads ISMFAFGFKKLRQQKQQGYQAIINNE. Positions 771-774 match the Tyrosine-type lysosomal sorting signal motif; that stretch reads GYQA.

It belongs to the CD36 family. In terms of processing, heavily glycosylated.

It localises to the lysosome membrane. In terms of biological role, may act as a lysosomal receptor. May be involved in macropinocytosis and fluid phase exocytosis. Binds to the anionic phospholipid phosphoinositol 4,5-bisphosphate, but not to phosphatidylcholine and only weakly to phosphatidylserine. This chain is Lysosome membrane protein 2-A (lmpA), found in Dictyostelium discoideum (Social amoeba).